Here is a 455-residue protein sequence, read N- to C-terminus: C4-dicarboxylate transport protein (455 aa).

Transmembrane regions (helical) follow at residues 20–40 (HLYF…HFYP), 59–79 (MIIA…MGTL), 91–111 (GYFL…ANVI), 160–180 (GNIL…ILIG), 209–229 (PIGA…ASVV), 231–251 (LATL…VVLG), 344–364 (LLLV…AGFI), and 367–387 (AATL…ILGV).

The protein belongs to the dicarboxylate/amino acid:cation symporter (DAACS) (TC 2.A.23) family.

The protein resides in the cell inner membrane. Its function is as follows. Responsible for the transport of dicarboxylates such as succinate, fumarate, and malate from the periplasm across the membrane. In Paracoccus denitrificans (strain Pd 1222), this protein is C4-dicarboxylate transport protein.